Reading from the N-terminus, the 398-residue chain is Tear acid lipase-like protein (398 aa).

The N-terminal stretch at 1-19 (MSWLLSTMCLVHVCGNIFC) is a signal peptide. The Nucleophile role is filled by Ser170. Residues Cys243 and Cys252 are joined by a disulfide bond. N-linked (GlcNAc...) asparagine glycosylation occurs at Asn268. Residues Asp340 and His369 each act as charge relay system in the active site.

The protein belongs to the AB hydrolase superfamily. Lipase family. As to quaternary structure, monomer. Post-translationally, N-glycosylated. As to expression, expressed in female lacrimal gland acinar cells from where it is secreted into tears (at protein level).

Its subcellular location is the secreted. Its function is as follows. Female-specific protein which lacks detectable lipase activity against a range of substrates. Binds the hydrophobic lipid 1-aminoanthracene with high affinity. This chain is Tear acid lipase-like protein, found in Mesocricetus auratus (Golden hamster).